The chain runs to 340 residues: Organic solute transporter subunit alpha (340 aa).

Over 1-48 (MEPGRTHIKLDPRYTAELLELLETNYSISPACFSHPPTAAQLLRALGP) the chain is Extracellular. Asn25 is a glycosylation site (N-linked (GlcNAc...) asparagine). A helical membrane pass occupies residues 49 to 69 (VDIALTIILTFLTTGSVAIFL). Residues 70–87 (EDAVYLYKNTLCPIKKRT) lie on the Cytoplasmic side of the membrane. A helical membrane pass occupies residues 88–108 (LIWSSSAPTVVSVFCCFGLWI). Residues 109–114 (PRALTL) are Extracellular-facing. A helical membrane pass occupies residues 115–135 (VEMAITSFYAVCFYLLMMVMV). The Cytoplasmic segment spans residues 136–181 (EGFGGKKAVLRTLKDTPMRVHTGPCCCCCPCCPPLILTRKKLQLLL). Residues 182 to 202 (LGPFQYAFFKITLSIVGLFLI) traverse the membrane as a helical segment. Over 203–219 (PDGIYDPGEISEKSAAL) the chain is Extracellular. A helical transmembrane segment spans residues 220–240 (WINNLLAVSTLLALWSLAILF). Topologically, residues 241–255 (RQAKMHLGEQNMGSK) are cytoplasmic. The chain crosses the membrane as a helical span at residues 256 to 276 (FALFQVLVILTALQPAIFSIL). Over 277 to 297 (ANSGQIACSPPYSSKIRSQVM) the chain is Extracellular. A helical transmembrane segment spans residues 298–317 (NCHMLILETFLMTVLTRMYY). Residues 318 to 340 (RRKDDKVGYEACSLPDLDSALKA) are Cytoplasmic-facing. The residue at position 330 (Ser330) is a Phosphoserine.

The protein belongs to the OST-alpha family. As to quaternary structure, interacts with SLC51B. The Ost-alpha/Ost-beta complex is a heterodimer composed of alpha (SLC51A) and beta (SLC51B) subunit. N-glycosylated. As to expression, present at high levels in ileum. In ileum, it is restricted to the apical domain on the mature villus enterocytes with little detectable expression in the goblet cells or crypt enterocytes (at protein level). Expressed in kidney but not in heart, brain, liver, spleen, embryo, lung, thymus, ovary nor testis.

The protein resides in the cell membrane. It is found in the endoplasmic reticulum membrane. The catalysed reaction is taurocholate(out) = taurocholate(in). The enzyme catalyses tauroursodeoxycholate(out) = tauroursodeoxycholate(in). It carries out the reaction glycoursodeoxycholate(out) = glycoursodeoxycholate(in). It catalyses the reaction glycocholate(out) = glycocholate(in). The catalysed reaction is taurochenodeoxycholate(out) = taurochenodeoxycholate(in). The enzyme catalyses glycochenodeoxycholate(out) = glycochenodeoxycholate(in). It carries out the reaction taurodeoxycholate(out) = taurodeoxycholate(in). It catalyses the reaction glycodeoxycholate(out) = glycodeoxycholate(in). The catalysed reaction is prostaglandin E2(out) = prostaglandin E2(in). The enzyme catalyses estrone 3-sulfate(out) = estrone 3-sulfate(in). It carries out the reaction dehydroepiandrosterone 3-sulfate(out) = dehydroepiandrosterone 3-sulfate(in). In terms of biological role, essential component of the Ost-alpha/Ost-beta complex, a heterodimer that acts as the intestinal basolateral transporter responsible for bile acid export from enterocytes into portal blood. Efficiently transports the major species of bile acids (taurocholate). Taurine conjugates are transported more efficiently across the basolateral membrane than glycine-conjugated bile acids. Can also transport steroids such as estrone 3-sulfate and dehydroepiandrosterone 3-sulfate, therefore playing a role in the enterohepatic circulation of sterols. Able to transport eicosanoids such as prostaglandin E2. The sequence is that of Organic solute transporter subunit alpha (Slc51a) from Mus musculus (Mouse).